Consider the following 307-residue polypeptide: Acyl transferase (307 aa).

Active-site charge relay system residues include Ser116, Asp213, and His243.

This sequence belongs to the LuxD family.

It participates in lipid metabolism; fatty acid reduction for biolumincescence. Its function is as follows. Acyl transferase is part of the fatty acid reductase system required for aldehyde biosynthesis; it produces fatty acids for the luminescent reaction. In Photorhabdus laumondii subsp. laumondii (strain DSM 15139 / CIP 105565 / TT01) (Photorhabdus luminescens subsp. laumondii), this protein is Acyl transferase.